Reading from the N-terminus, the 101-residue chain is Replication restart protein PriB (101 aa).

The SSB domain maps to 1–101 (MTTNNLVLSG…IHAENVELKT (101 aa)).

The protein belongs to the PriB family. In terms of assembly, homodimer. Interacts with PriA and DnaT. Component of the replication restart primosome. Primosome assembly occurs via a 'hand-off' mechanism. PriA binds to replication forks, subsequently PriB then DnaT bind; DnaT then displaces ssDNA to generate the helicase loading substrate.

Involved in the restart of stalled replication forks, which reloads the replicative helicase on sites other than the origin of replication; the PriA-PriB pathway is the major replication restart pathway. During primosome assembly it facilitates complex formation between PriA and DnaT on DNA; stabilizes PriA on DNA. Stimulates the DNA unwinding activity of PriA helicase. This Shewanella oneidensis (strain ATCC 700550 / JCM 31522 / CIP 106686 / LMG 19005 / NCIMB 14063 / MR-1) protein is Replication restart protein PriB.